We begin with the raw amino-acid sequence, 189 residues long: dCTP deaminase (189 aa).

Residues 112 to 117, 136 to 138, Gln-157, Tyr-171, and Gln-181 each bind dCTP; these read KSTYAR and TLE. Glu-138 (proton donor/acceptor) is an active-site residue.

Belongs to the dCTP deaminase family. In terms of assembly, homotrimer.

It carries out the reaction dCTP + H2O + H(+) = dUTP + NH4(+). It functions in the pathway pyrimidine metabolism; dUMP biosynthesis; dUMP from dCTP (dUTP route): step 1/2. Functionally, catalyzes the deamination of dCTP to dUTP. This is dCTP deaminase from Halorhodospira halophila (strain DSM 244 / SL1) (Ectothiorhodospira halophila (strain DSM 244 / SL1)).